A 141-amino-acid chain; its full sequence is MAKKVVAVIKLALQAGKANPAPPVGPALGQHGVNIMAFCKEYNARTQDKAGYVIPVEISVFEDRSFTFITKTPPASVLITKAAGIQKGSGESAKGSVGSINRSQLEEIAKTKLPDLNCTSVESAMRVIEGTARNMGVAISD.

The protein belongs to the universal ribosomal protein uL11 family. Part of the ribosomal stalk of the 50S ribosomal subunit. Interacts with L10 and the large rRNA to form the base of the stalk. L10 forms an elongated spine to which L12 dimers bind in a sequential fashion forming a multimeric L10(L12)X complex. In terms of processing, one or more lysine residues are methylated.

Forms part of the ribosomal stalk which helps the ribosome interact with GTP-bound translation factors. This chain is Large ribosomal subunit protein uL11, found in Synechococcus sp. (strain CC9311).